A 294-amino-acid chain; its full sequence is Probable endonuclease 4 (294 aa).

9 residues coordinate Zn(2+): His78, His118, Glu155, Asp189, His192, His226, Asp239, His241, and Glu271.

Belongs to the AP endonuclease 2 family. Zn(2+) is required as a cofactor.

The enzyme catalyses Endonucleolytic cleavage to 5'-phosphooligonucleotide end-products.. Its function is as follows. Endonuclease IV plays a role in DNA repair. It cleaves phosphodiester bonds at apurinic or apyrimidinic (AP) sites, generating a 3'-hydroxyl group and a 5'-terminal sugar phosphate. The chain is Probable endonuclease 4 from Oleidesulfovibrio alaskensis (strain ATCC BAA-1058 / DSM 17464 / G20) (Desulfovibrio alaskensis).